The following is a 338-amino-acid chain: Aspartate-semialdehyde dehydrogenase (338 aa).

Residues 13–16 (SGAV) and 41–42 (RS) each bind NADP(+). Arg-101 is a binding site for phosphate. The Acyl-thioester intermediate role is filled by Cys-132. Gln-159 serves as a coordination point for substrate. NADP(+) contacts are provided by residues 162-163 (SG) and Pro-187. Position 216 (Lys-216) interacts with phosphate. Arg-238 contacts substrate. Residue His-245 is the Proton acceptor of the active site. An NADP(+)-binding site is contributed by Asn-317.

This sequence belongs to the aspartate-semialdehyde dehydrogenase family. In terms of assembly, homodimer.

The catalysed reaction is L-aspartate 4-semialdehyde + phosphate + NADP(+) = 4-phospho-L-aspartate + NADPH + H(+). It participates in amino-acid biosynthesis; L-lysine biosynthesis via DAP pathway; (S)-tetrahydrodipicolinate from L-aspartate: step 2/4. It functions in the pathway amino-acid biosynthesis; L-methionine biosynthesis via de novo pathway; L-homoserine from L-aspartate: step 2/3. Its pathway is amino-acid biosynthesis; L-threonine biosynthesis; L-threonine from L-aspartate: step 2/5. Functionally, catalyzes the NADPH-dependent formation of L-aspartate-semialdehyde (L-ASA) by the reductive dephosphorylation of L-aspartyl-4-phosphate. This Shewanella sp. (strain DB6705) protein is Aspartate-semialdehyde dehydrogenase.